A 172-amino-acid chain; its full sequence is MMDAVRARIRDVPDFPKKGIVFKDITPVLSDPHTFREVIDAFVERWKGERVDKVIGIESRGFIFAAPIAYALGAGFTIVRKPGKLPWETIREVYALEYGEGALELHIDAIGPGDRVLVVDDVLATGGTAGAAGRLVVRQGAELLGYAFLAELSFLNGARQLGHAKVHSLLTF.

This sequence belongs to the purine/pyrimidine phosphoribosyltransferase family. Homodimer.

The protein localises to the cytoplasm. The enzyme catalyses AMP + diphosphate = 5-phospho-alpha-D-ribose 1-diphosphate + adenine. It participates in purine metabolism; AMP biosynthesis via salvage pathway; AMP from adenine: step 1/1. Functionally, catalyzes a salvage reaction resulting in the formation of AMP, that is energically less costly than de novo synthesis. This chain is Adenine phosphoribosyltransferase, found in Anaeromyxobacter dehalogenans (strain 2CP-1 / ATCC BAA-258).